Reading from the N-terminus, the 150-residue chain is MFLFNILVLHGPNLNLLGLREPGIYGSVTLDNINRLLKQEAEAIGVKISISQSNHEGVLVDLIHSSSEQHQGILINAGAYTHTSVAIRDAISGINIPTVEVHLSNIYSREEFRHHSFIAPVAIGQISGFGSQSYLLGLKAIVNYLKNRGD.

The active-site Proton acceptor is the tyrosine 25. Residues asparagine 76, histidine 82, and aspartate 89 each coordinate substrate. Catalysis depends on histidine 102, which acts as the Proton donor. Substrate contacts are provided by residues 103-104 (LS) and arginine 113.

It belongs to the type-II 3-dehydroquinase family. Homododecamer.

It carries out the reaction 3-dehydroquinate = 3-dehydroshikimate + H2O. Its pathway is metabolic intermediate biosynthesis; chorismate biosynthesis; chorismate from D-erythrose 4-phosphate and phosphoenolpyruvate: step 3/7. In terms of biological role, catalyzes a trans-dehydration via an enolate intermediate. The sequence is that of 3-dehydroquinate dehydratase from Trichodesmium erythraeum (strain IMS101).